The following is a 311-amino-acid chain: Ribosomal RNA small subunit methyltransferase H (311 aa).

S-adenosyl-L-methionine contacts are provided by residues 35–37 (GGH), Asp-55, Phe-80, Asp-102, and Gln-109.

The protein belongs to the methyltransferase superfamily. RsmH family.

It localises to the cytoplasm. The enzyme catalyses cytidine(1402) in 16S rRNA + S-adenosyl-L-methionine = N(4)-methylcytidine(1402) in 16S rRNA + S-adenosyl-L-homocysteine + H(+). Specifically methylates the N4 position of cytidine in position 1402 (C1402) of 16S rRNA. In Pseudoalteromonas atlantica (strain T6c / ATCC BAA-1087), this protein is Ribosomal RNA small subunit methyltransferase H.